The chain runs to 291 residues: NAD kinase (291 aa).

D73 (proton acceptor) is an active-site residue. Residues 73 to 74 (DG), 147 to 148 (ND), R175, D177, 188 to 193 (TAYALS), A212, and Q246 each bind NAD(+).

This sequence belongs to the NAD kinase family. Requires a divalent metal cation as cofactor.

The protein resides in the cytoplasm. It carries out the reaction NAD(+) + ATP = ADP + NADP(+) + H(+). In terms of biological role, involved in the regulation of the intracellular balance of NAD and NADP, and is a key enzyme in the biosynthesis of NADP. Catalyzes specifically the phosphorylation on 2'-hydroxyl of the adenosine moiety of NAD to yield NADP. The chain is NAD kinase from Polaromonas naphthalenivorans (strain CJ2).